Reading from the N-terminus, the 118-residue chain is Ribosome-binding factor A (118 aa).

Belongs to the RbfA family. In terms of assembly, monomer. Binds 30S ribosomal subunits, but not 50S ribosomal subunits or 70S ribosomes.

It is found in the cytoplasm. Functionally, one of several proteins that assist in the late maturation steps of the functional core of the 30S ribosomal subunit. Associates with free 30S ribosomal subunits (but not with 30S subunits that are part of 70S ribosomes or polysomes). Required for efficient processing of 16S rRNA. May interact with the 5'-terminal helix region of 16S rRNA. In Bacillus cereus (strain AH820), this protein is Ribosome-binding factor A.